We begin with the raw amino-acid sequence, 278 residues long: HTH-type transcriptional activator RhaS (278 aa).

The 99-residue stretch at 174 to 272 folds into the HTH araC/xylS-type domain; the sequence is NLLLAWLEDH…NWSPRDIRQG (99 aa). 2 consecutive DNA-binding regions (H-T-H motif) follow at residues 191–212 and 239–262; these read DAVA…KQQT and VTDI…RREF.

As to quaternary structure, binds DNA as a dimer.

It localises to the cytoplasm. Its function is as follows. Activates expression of the rhaBAD and rhaT operons. The chain is HTH-type transcriptional activator RhaS from Escherichia coli (strain SE11).